Here is a 166-residue protein sequence, read N- to C-terminus: SsrA-binding protein (166 aa).

This sequence belongs to the SmpB family.

It localises to the cytoplasm. Its function is as follows. Required for rescue of stalled ribosomes mediated by trans-translation. Binds to transfer-messenger RNA (tmRNA), required for stable association of tmRNA with ribosomes. tmRNA and SmpB together mimic tRNA shape, replacing the anticodon stem-loop with SmpB. tmRNA is encoded by the ssrA gene; the 2 termini fold to resemble tRNA(Ala) and it encodes a 'tag peptide', a short internal open reading frame. During trans-translation Ala-aminoacylated tmRNA acts like a tRNA, entering the A-site of stalled ribosomes, displacing the stalled mRNA. The ribosome then switches to translate the ORF on the tmRNA; the nascent peptide is terminated with the 'tag peptide' encoded by the tmRNA and targeted for degradation. The ribosome is freed to recommence translation, which seems to be the essential function of trans-translation. The protein is SsrA-binding protein of Parasynechococcus marenigrum (strain WH8102).